A 189-amino-acid polypeptide reads, in one-letter code: dCTP deaminase (189 aa).

DCTP is bound by residues 112-117 (KSTYAR), 136-138 (TLE), Q157, Y171, and Q181. The active-site Proton donor/acceptor is the E138.

Belongs to the dCTP deaminase family. In terms of assembly, homotrimer.

It catalyses the reaction dCTP + H2O + H(+) = dUTP + NH4(+). It participates in pyrimidine metabolism; dUMP biosynthesis; dUMP from dCTP (dUTP route): step 1/2. Its function is as follows. Catalyzes the deamination of dCTP to dUTP. This chain is dCTP deaminase, found in Paraburkholderia phymatum (strain DSM 17167 / CIP 108236 / LMG 21445 / STM815) (Burkholderia phymatum).